The sequence spans 206 residues: Large ribosomal subunit protein uL4 (206 aa).

Residues 46 to 77 are disordered; sequence GTRAQKDREQVRHSTKKPFKQKGTGRARAGMT. The span at 58-70 shows a compositional bias: basic residues; it reads HSTKKPFKQKGTG.

This sequence belongs to the universal ribosomal protein uL4 family. In terms of assembly, part of the 50S ribosomal subunit.

In terms of biological role, one of the primary rRNA binding proteins, this protein initially binds near the 5'-end of the 23S rRNA. It is important during the early stages of 50S assembly. It makes multiple contacts with different domains of the 23S rRNA in the assembled 50S subunit and ribosome. Forms part of the polypeptide exit tunnel. This Polaromonas sp. (strain JS666 / ATCC BAA-500) protein is Large ribosomal subunit protein uL4.